The following is a 265-amino-acid chain: Undecaprenyl-diphosphatase (265 aa).

7 helical membrane passes run 38 to 58, 75 to 95, 108 to 128, 135 to 155, 181 to 201, 215 to 235, and 244 to 264; these read RSDFFNIVIQAGAILAICLAL, RDYVLKVGVAFLVTAVVGLIV, PVAWALLIGGVWMLVAEHFAG, VVTWKVAIAVGLAQVVAGVFP, FVFMVGIPTMFAASGYALLEM, VAVAFVAATITGFVVVKWLLG, and VFAVYRMLLGAALLLWLPAAA.

This sequence belongs to the UppP family.

The protein resides in the cell inner membrane. The enzyme catalyses di-trans,octa-cis-undecaprenyl diphosphate + H2O = di-trans,octa-cis-undecaprenyl phosphate + phosphate + H(+). Catalyzes the dephosphorylation of undecaprenyl diphosphate (UPP). Confers resistance to bacitracin. The protein is Undecaprenyl-diphosphatase of Xanthomonas euvesicatoria pv. vesicatoria (strain 85-10) (Xanthomonas campestris pv. vesicatoria).